The sequence spans 301 residues: Protoheme IX farnesyltransferase (301 aa).

The next 9 membrane-spanning stretches (helical) occupy residues 9 to 29 (VLAY…VATI), 42 to 62 (IALI…ANSL), 89 to 109 (TSHA…WLWW), 113 to 133 (LLAG…YTMV), 142 to 162 (VVWG…AVTG), 168 to 188 (PIVL…ALAM), 211 to 231 (VTKQ…TLVP), 232 to 252 (AAGV…LLMA), and 280 to 300 (VVFV…GSLL).

The protein belongs to the UbiA prenyltransferase family. Protoheme IX farnesyltransferase subfamily.

It localises to the cell membrane. It catalyses the reaction heme b + (2E,6E)-farnesyl diphosphate + H2O = Fe(II)-heme o + diphosphate. It participates in porphyrin-containing compound metabolism; heme O biosynthesis; heme O from protoheme: step 1/1. Its function is as follows. Converts heme B (protoheme IX) to heme O by substitution of the vinyl group on carbon 2 of heme B porphyrin ring with a hydroxyethyl farnesyl side group. The chain is Protoheme IX farnesyltransferase from Rhodococcus jostii (strain RHA1).